The chain runs to 550 residues: Cytochrome P450 monooxygenase FFUJ_09176 (550 aa).

An N-terminal signal peptide occupies residues 1–31 (MLQTIPMPSRELTIALAVLSLLMVLVQRAGS). Residues 430–441 (FIPERFEGDTRS) are compositionally biased toward basic and acidic residues. The disordered stretch occupies residues 430 to 451 (FIPERFEGDTRSSQESAASPDV). Position 466 (C466) interacts with heme.

The protein belongs to the cytochrome P450 family.

Cytochrome P450 monooxygenase; part of the DMATS1 gene cluster that mediates the biosynthesis of a reversely N-prenylated monomeric L-tryptophan (r-N-DMAT). Seems not to contribute to the final DMATS1 product. This is Cytochrome P450 monooxygenase FFUJ_09176 from Gibberella fujikuroi (strain CBS 195.34 / IMI 58289 / NRRL A-6831) (Bakanae and foot rot disease fungus).